Consider the following 289-residue polypeptide: Ribosomal RNA small subunit methyltransferase A (289 aa).

S-adenosyl-L-methionine is bound by residues Asn-21, Leu-23, Gly-48, Glu-69, Asp-94, and Asn-120.

The protein belongs to the class I-like SAM-binding methyltransferase superfamily. rRNA adenine N(6)-methyltransferase family. RsmA subfamily.

The protein localises to the cytoplasm. The enzyme catalyses adenosine(1518)/adenosine(1519) in 16S rRNA + 4 S-adenosyl-L-methionine = N(6)-dimethyladenosine(1518)/N(6)-dimethyladenosine(1519) in 16S rRNA + 4 S-adenosyl-L-homocysteine + 4 H(+). Functionally, specifically dimethylates two adjacent adenosines (A1518 and A1519) in the loop of a conserved hairpin near the 3'-end of 16S rRNA in the 30S particle. May play a critical role in biogenesis of 30S subunits. In Haemophilus ducreyi (strain 35000HP / ATCC 700724), this protein is Ribosomal RNA small subunit methyltransferase A.